Here is a 560-residue protein sequence, read N- to C-terminus: Chaperonin GroEL 2 (560 aa).

Residues Thr-29–Pro-32, Asp-86–Thr-90, Gly-413, Asn-478–Ala-480, and Asp-494 contribute to the ATP site.

This sequence belongs to the chaperonin (HSP60) family. In terms of assembly, forms a cylinder of 14 subunits composed of two heptameric rings stacked back-to-back. Interacts with the co-chaperonin GroES.

It localises to the cytoplasm. It carries out the reaction ATP + H2O + a folded polypeptide = ADP + phosphate + an unfolded polypeptide.. Together with its co-chaperonin GroES, plays an essential role in assisting protein folding. The GroEL-GroES system forms a nano-cage that allows encapsulation of the non-native substrate proteins and provides a physical environment optimized to promote and accelerate protein folding. This chain is Chaperonin GroEL 2, found in Trichormus variabilis (strain ATCC 29413 / PCC 7937) (Anabaena variabilis).